The primary structure comprises 916 residues: Translation initiation factor IF-2 (916 aa).

The interval 1–325 is disordered; the sequence is MTDSNDDKTL…QEKFRRSQVQ (325 aa). Residues 60–91 show a composition bias toward low complexity; the sequence is ITPATPAAPVRAAEPAPAPAQARPQQSTPAPR. A compositionally biased stretch (polar residues) spans 97 to 108; sequence GQANQRPQQSYQ. Residues 125-182 are compositionally biased toward basic and acidic residues; sequence SPEEMDARRRALAESQARDAQDAIRRAEEEKRRAAEEAVRKAAEAEEAARRAVEEAAR. Composition is skewed to low complexity over residues 183 to 209 and 229 to 243; these read QAEAAAAAAAEPAVTAPAPAPVTAEAR and DGAAARPAPGAPAAV. One can recognise a tr-type G domain in the interval 414–581; that stretch reads SRPPVVTIMG…AVLLQAEILD (168 aa). Positions 423-430 are G1; sequence GHVDHGKT. 423 to 430 serves as a coordination point for GTP; that stretch reads GHVDHGKT. Residues 448–452 form a G2 region; the sequence is GITQH. The tract at residues 469 to 472 is G3; it reads DTPG. Residues 469–473 and 523–526 contribute to the GTP site; these read DTPGH and NKID. The tract at residues 523-526 is G4; it reads NKID. Residues 559–561 form a G5 region; it reads SAK.

The protein belongs to the TRAFAC class translation factor GTPase superfamily. Classic translation factor GTPase family. IF-2 subfamily.

The protein resides in the cytoplasm. One of the essential components for the initiation of protein synthesis. Protects formylmethionyl-tRNA from spontaneous hydrolysis and promotes its binding to the 30S ribosomal subunits. Also involved in the hydrolysis of GTP during the formation of the 70S ribosomal complex. In Rhizobium etli (strain ATCC 51251 / DSM 11541 / JCM 21823 / NBRC 15573 / CFN 42), this protein is Translation initiation factor IF-2.